A 150-amino-acid chain; its full sequence is 3-hydroxyacyl-[acyl-carrier-protein] dehydratase FabZ (150 aa).

Residue His57 is part of the active site.

This sequence belongs to the thioester dehydratase family. FabZ subfamily.

It localises to the cytoplasm. The enzyme catalyses a (3R)-hydroxyacyl-[ACP] = a (2E)-enoyl-[ACP] + H2O. Involved in unsaturated fatty acids biosynthesis. Catalyzes the dehydration of short chain beta-hydroxyacyl-ACPs and long chain saturated and unsaturated beta-hydroxyacyl-ACPs. The polypeptide is 3-hydroxyacyl-[acyl-carrier-protein] dehydratase FabZ (Actinobacillus succinogenes (strain ATCC 55618 / DSM 22257 / CCUG 43843 / 130Z)).